We begin with the raw amino-acid sequence, 525 residues long: Bifunctional purine biosynthesis protein PurH (525 aa).

One can recognise an MGS-like domain in the interval 10 to 156; sequence HRIPIRRALV…KNHPSVAIVT (147 aa).

This sequence belongs to the PurH family.

It catalyses the reaction (6R)-10-formyltetrahydrofolate + 5-amino-1-(5-phospho-beta-D-ribosyl)imidazole-4-carboxamide = 5-formamido-1-(5-phospho-D-ribosyl)imidazole-4-carboxamide + (6S)-5,6,7,8-tetrahydrofolate. It carries out the reaction IMP + H2O = 5-formamido-1-(5-phospho-D-ribosyl)imidazole-4-carboxamide. It participates in purine metabolism; IMP biosynthesis via de novo pathway; 5-formamido-1-(5-phospho-D-ribosyl)imidazole-4-carboxamide from 5-amino-1-(5-phospho-D-ribosyl)imidazole-4-carboxamide (10-formyl THF route): step 1/1. It functions in the pathway purine metabolism; IMP biosynthesis via de novo pathway; IMP from 5-formamido-1-(5-phospho-D-ribosyl)imidazole-4-carboxamide: step 1/1. The protein is Bifunctional purine biosynthesis protein PurH of Nocardioides sp. (strain ATCC BAA-499 / JS614).